The primary structure comprises 1058 residues: Bromodomain-containing protein 1 (1058 aa).

Over residues 1-12 the composition is skewed to basic residues; that stretch reads MRRKGRCHRGSA. The tract at residues 1 to 26 is disordered; it reads MRRKGRCHRGSAARHPSSPCSVKHSP. An interaction with KAT7/HBO1 and histones region spans residues 31 to 80; that stretch reads LTYAQAQRMVEIEIEGRLHRISIFDPLEIILEDDLTAQEMSECNSNKENS. Residues 92–116 are disordered; that stretch reads HKNNRVKKKNEALPSAHGTPASASA. Phosphoserine is present on Ser128. Residues 214-264 form a PHD-type 1 zinc finger; it reads DAVCCICMDGECQNSNVILFCDMCNLAVHQECYGVPYIPEGQWLCRHCLQS. The C2HC pre-PHD-type zinc finger occupies 268-301; that stretch reads PADCVLCPNKGGAFKKTDDDRWGHVVCALWIPEV. The segment at 325 to 389 adopts a PHD-type 2 zinc-finger fold; it reads LTCYLCKQKG…RKTAYCDVHT (65 aa). Lys368, Lys516, and Lys519 each carry N6-acetyllysine. Glycyl lysine isopeptide (Lys-Gly) (interchain with G-Cter in SUMO2) cross-links involve residues Lys554 and Lys594. Residues 562-666 enclose the Bromo domain; the sequence is LRLTPLTVLL…DQGGVVLRQA (105 aa). 2 disordered regions span residues 755 to 776 and 791 to 868; these read LSQQ…EEDG and LETL…DSSF. Phosphoserine is present on Ser803. Low complexity predominate over residues 852–867; that stretch reads SESSISSSNSPLCDSS. The residue at position 903 (Lys903) is an N6-acetyllysine. Arg906 bears the Phosphoserine mark. Residues 929-1012 enclose the PWWP domain; it reads PLKVVWAKCS…KSKMVPLGID (84 aa). A phosphoserine mark is found at Ser1052 and Ser1055.

In terms of assembly, component of some HBO1 complex composed of KAT7/HBO1, MEAF6, ING4 and BRD1/BRPF2. Component of the MOZ/MORF complex composed at least of ING5, KAT6A, KAT6B, MEAF6 and one of BRPF1, BRD1/BRPF2 and BRPF3. Interacts (via PHD-type zinc finger domain) with unmodified histone H3. Interacts (via PWWP domain) with dimethylated and trimethylated 'Lys-79' on histone H3. In terms of tissue distribution, highly expressed in testis.

It is found in the nucleus. The protein localises to the chromosome. Scaffold subunit of various histone acetyltransferase (HAT) complexes, such as the MOZ/MORF and HBO1 complexes, that acts as a regulator of hematopoiesis. Plays a key role in HBO1 complex by directing KAT7/HBO1 specificity towards histone H3 'Lys-14' acetylation (H3K14ac), thereby promoting erythroid differentiation. The polypeptide is Bromodomain-containing protein 1 (Homo sapiens (Human)).